The following is a 1450-amino-acid chain: DNA-directed RNA polymerase III subunit rpc1 (1450 aa).

The Zn(2+) site is built by C67, C70, C77, H80, C107, C110, and C154. D491, D493, and D495 together coordinate Mg(2+). Residues 832 to 844 (PTEFFFHTMGGRE) are bridging helix.

It belongs to the RNA polymerase beta' chain family. Component of the RNA polymerase III (Pol III) complex consisting of 17 subunits.

The protein resides in the nucleus. The enzyme catalyses RNA(n) + a ribonucleoside 5'-triphosphate = RNA(n+1) + diphosphate. DNA-dependent RNA polymerase catalyzes the transcription of DNA into RNA using the four ribonucleoside triphosphates as substrates. Largest and catalytic core component of RNA polymerase III which synthesizes small RNAs, such as 5S rRNA and tRNAs. Forms the polymerase active center together with the second largest subunit. A single-stranded DNA template strand of the promoter is positioned within the central active site cleft of Pol III. A bridging helix emanates from RPC1 and crosses the cleft near the catalytic site and is thought to promote translocation of Pol III by acting as a ratchet that moves the RNA-DNA hybrid through the active site by switching from straight to bent conformations at each step of nucleotide addition. The protein is DNA-directed RNA polymerase III subunit rpc1 (polr3a) of Dictyostelium discoideum (Social amoeba).